The chain runs to 217 residues: MKFSFAALASAMLLTSTAAFAGIVTSSSNIDFLAIDGQKANKDLLKSTKSFNINESQTHQVVVRVSEIVRHGSDRSLYESDPIVVTFQGTNEDVVISAPKLENERDIKNFKDSPSVIVKTNSGKIIATKQEILKQEGFLPGANLIDTLSEYNASGSVASVSNFATAMPAVALGFAKAQKGKVVVQGENIAEQQLQFWFQQADKETQARFINWAKNQK.

The N-terminal stretch at 1-21 (MKFSFAALASAMLLTSTAAFA) is a signal peptide.

This sequence belongs to the UPF0319 family.

The chain is UPF0319 protein HSM_0266 from Histophilus somni (strain 2336) (Haemophilus somnus).